Consider the following 136-residue polypeptide: ATP synthase epsilon chain (136 aa).

It belongs to the ATPase epsilon chain family. F-type ATPases have 2 components, CF(1) - the catalytic core - and CF(0) - the membrane proton channel. CF(1) has five subunits: alpha(3), beta(3), gamma(1), delta(1), epsilon(1). CF(0) has three main subunits: a, b and c.

Its subcellular location is the cell membrane. Produces ATP from ADP in the presence of a proton gradient across the membrane. This Macrococcus caseolyticus (strain JCSC5402) (Macrococcoides caseolyticum) protein is ATP synthase epsilon chain.